Here is a 139-residue protein sequence, read N- to C-terminus: Small ribosomal subunit protein uS12m (139 aa).

Residues 1 to 29 constitute a mitochondrion transit peptide; it reads MSWPGLLYGLTTSLSRGLALAPQLWAARS.

It belongs to the universal ribosomal protein uS12 family. As to quaternary structure, component of the mitochondrial ribosome small subunit (28S) which comprises a 12S rRNA and about 30 distinct proteins.

The protein localises to the mitochondrion. In Mus musculus (Mouse), this protein is Small ribosomal subunit protein uS12m (Mrps12).